Consider the following 122-residue polypeptide: Large ribosomal subunit protein bL12 (122 aa).

It belongs to the bacterial ribosomal protein bL12 family. Homodimer. Part of the ribosomal stalk of the 50S ribosomal subunit. Forms a multimeric L10(L12)X complex, where L10 forms an elongated spine to which 2 to 4 L12 dimers bind in a sequential fashion. Binds GTP-bound translation factors.

In terms of biological role, forms part of the ribosomal stalk which helps the ribosome interact with GTP-bound translation factors. Is thus essential for accurate translation. The protein is Large ribosomal subunit protein bL12 of Vibrio parahaemolyticus serotype O3:K6 (strain RIMD 2210633).